The chain runs to 647 residues: MSIPPFSQASLEWHEGQPYSAHFGDVYFSRESGLEETRHVFLRHNQLAERWQTMQQDAFTIVETGFGTGLNFLCAWQMWEHTAPSHVRLHFVSIEKFPLSHADLARALALWPELRQYSTALLAQYHQIVPGWQRLVFCQGRVQLTLLVGDVLALLPQLSSHADAWFLDGFAPSRNPEMWQEALFDNMAAFSHKHTTFATFTSAGIVKRGLQAAGFEVHKVAGHGRKRDMLCGRFTLNERPAMRAGRAVVIGGGIAGTASSHMLAERGWQVNLVEQEPALAQHASGNPVGVLYPKLARKDVPLGRLSLAGYLHSLRLLQQLGLDATAHARCGMLQLAFDQRELERCQTIAAQGFPPELLHWVDQEQAGNIAGIALQYGALYFPEAGWVRPRAYCEALAGHANITRTLATRVTGLSQHGNAWQVWTGEQLLDEADIVVIANAAQAASFVQSRHLPLEQVRGQISRLHHVDGAPVLHALLCTDGYISPLIDGAYCLGATFVPGDTTTSVRDEEHAQNLDMLKHMAPSLYDTLMPQAPTGRAAVRCTSVDYLPLVGPVLDAALLEARPPRYTADPASSLPWLPGLYVNTGHGSKGLTTAPIAAEMLACAIHHEPAPVDSELLAVLDPNRFVLRKLGLKRLVRGLACHPLRR.

Residues 1–235 (MSIPPFSQAS…KRDMLCGRFT (235 aa)) form a tRNA (mnm(5)s(2)U34)-methyltransferase region. The tract at residues 250 to 647 (IGGGIAGTAS…RGLACHPLRR (398 aa)) is FAD-dependent cmnm(5)s(2)U34 oxidoreductase.

The protein in the N-terminal section; belongs to the methyltransferase superfamily. tRNA (mnm(5)s(2)U34)-methyltransferase family. In the C-terminal section; belongs to the DAO family. FAD is required as a cofactor.

Its subcellular location is the cytoplasm. It carries out the reaction 5-aminomethyl-2-thiouridine(34) in tRNA + S-adenosyl-L-methionine = 5-methylaminomethyl-2-thiouridine(34) in tRNA + S-adenosyl-L-homocysteine + H(+). In terms of biological role, catalyzes the last two steps in the biosynthesis of 5-methylaminomethyl-2-thiouridine (mnm(5)s(2)U) at the wobble position (U34) in tRNA. Catalyzes the FAD-dependent demodification of cmnm(5)s(2)U34 to nm(5)s(2)U34, followed by the transfer of a methyl group from S-adenosyl-L-methionine to nm(5)s(2)U34, to form mnm(5)s(2)U34. The chain is tRNA 5-methylaminomethyl-2-thiouridine biosynthesis bifunctional protein MnmC from Methylobacillus flagellatus (strain ATCC 51484 / DSM 6875 / VKM B-1610 / KT).